Reading from the N-terminus, the 124-residue chain is Phycocyanin PC645 alpha-3 subunit (124 aa).

Residue R71 coordinates (2R,3E)-phycocyanobilin. The mesobiliverdin site is built by C73, Y81, and K97.

This sequence belongs to the phycoerythrin family. As to quaternary structure, heterotetramer of 2 different alpha chains and 2 identical beta chains which form 2 alpha-beta heterodimers within the heterotetramer. Post-translationally, contains one phycocyanobilin chromophore and one mesobiliverdin chromophore with binding mediated by both the alpha and beta subunits.

Its subcellular location is the plastid. It is found in the chloroplast thylakoid membrane. In terms of biological role, light-harvesting photosynthetic tetrapyrrole chromophore-protein from the phycobiliprotein complex. The chain is Phycocyanin PC645 alpha-3 subunit from Chroomonas sp. (strain CCMP270).